Consider the following 155-residue polypeptide: SsrA-binding protein (155 aa).

The protein belongs to the SmpB family.

Its subcellular location is the cytoplasm. In terms of biological role, required for rescue of stalled ribosomes mediated by trans-translation. Binds to transfer-messenger RNA (tmRNA), required for stable association of tmRNA with ribosomes. tmRNA and SmpB together mimic tRNA shape, replacing the anticodon stem-loop with SmpB. tmRNA is encoded by the ssrA gene; the 2 termini fold to resemble tRNA(Ala) and it encodes a 'tag peptide', a short internal open reading frame. During trans-translation Ala-aminoacylated tmRNA acts like a tRNA, entering the A-site of stalled ribosomes, displacing the stalled mRNA. The ribosome then switches to translate the ORF on the tmRNA; the nascent peptide is terminated with the 'tag peptide' encoded by the tmRNA and targeted for degradation. The ribosome is freed to recommence translation, which seems to be the essential function of trans-translation. The chain is SsrA-binding protein from Geobacillus sp. (strain WCH70).